Here is a 466-residue protein sequence, read N- to C-terminus: Ribulose bisphosphate carboxylase large chain (466 aa).

K5 is subject to N6,N6,N6-trimethyllysine. Substrate contacts are provided by N114 and T164. The active-site Proton acceptor is the K166. K168 contributes to the substrate binding site. 3 residues coordinate Mg(2+): K192, D194, and E195. K192 carries the N6-carboxylysine modification. The active-site Proton acceptor is H285. Substrate-binding residues include R286, H318, and S370.

Belongs to the RuBisCO large chain family. Type I subfamily. Heterohexadecamer of 8 large chains and 8 small chains. Mg(2+) serves as cofactor.

It is found in the plastid. The protein resides in the chloroplast. It catalyses the reaction 2 (2R)-3-phosphoglycerate + 2 H(+) = D-ribulose 1,5-bisphosphate + CO2 + H2O. It carries out the reaction D-ribulose 1,5-bisphosphate + O2 = 2-phosphoglycolate + (2R)-3-phosphoglycerate + 2 H(+). Its function is as follows. RuBisCO catalyzes two reactions: the carboxylation of D-ribulose 1,5-bisphosphate, the primary event in carbon dioxide fixation, as well as the oxidative fragmentation of the pentose substrate in the photorespiration process. Both reactions occur simultaneously and in competition at the same active site. The sequence is that of Ribulose bisphosphate carboxylase large chain from Drosera regia (King sundew).